The primary structure comprises 362 residues: Myricetin 3'/5'-O-methyltransferase 1 (362 aa).

Aspartate 229 is an S-adenosyl-L-methionine binding site. Histidine 267 functions as the Proton acceptor in the catalytic mechanism.

Belongs to the class I-like SAM-binding methyltransferase superfamily. Cation-independent O-methyltransferase family. As to quaternary structure, homodimer. As to expression, mainly expressed in leaves secreting glandular trichomes types 1 and 4 and, to a lesser extent, in storage trichomes type 6.

It carries out the reaction myricetin + S-adenosyl-L-methionine = laricitrin + S-adenosyl-L-homocysteine + H(+). It catalyses the reaction laricitrin + S-adenosyl-L-methionine = syringetin + S-adenosyl-L-homocysteine + H(+). The enzyme catalyses a 3'-hydroxyflavone + S-adenosyl-L-methionine = a 3'-methoxyflavone + S-adenosyl-L-homocysteine + H(+). The catalysed reaction is a 5'-hydroxy-3'-methoxyflavone + S-adenosyl-L-methionine = a 3',5'-dimethoxyflavone + S-adenosyl-L-homocysteine + H(+). It carries out the reaction quercetin + S-adenosyl-L-methionine = isorhamnetin + S-adenosyl-L-homocysteine + H(+). It catalyses the reaction rhamnetin + S-adenosyl-L-methionine = rhamnacene + S-adenosyl-L-homocysteine + H(+). The enzyme catalyses 3',4',5,7-tetrahydroxy-3-methoxyflavone + S-adenosyl-L-methionine = 3,3'-O-dimethylquercetin + S-adenosyl-L-homocysteine + H(+). Its pathway is flavonoid metabolism. Flavonoid 3'/5'-O-methyltransferase involved in the biosynthesis of polymethoxylated flavonoids natural products such as myricetin derivatives, aroma compounds possessing antioxidant properties and exhibiting pharmacological activities such as anti-carcinogen, anti-viral, anti-thrombotic, anti-diabetic, anti-atherosclerotic, and anti-inflammatory effects. Catalyzes S-adenosylmethionine-dependent regioselective 3'/5'-O-methylation of flavonoids; active on various hydroxylated flavonoid substrates, including myricetin and quercetin, but inactive toward kaempferol. Mediates the formation of 3'-methyl derivatives from quercetin, myricetin, 3-methyl quercetin and 7-methyl quercetin (rhamnetin), producing 3'-methyl quercetin (isorhamnetin), 3'-methyl myricetin (laricitrin), 3,3'-dimethyl quercetin (3-O-methylisorhamnetin) and 7,3'-dimethyl quercetin (7-O-methylisorhamnetin), respectively. Triggers the 5'-O-methylation of 3'-methyl myricetin (laricitrin), thus leading to production of 3',5'-dimethyl myricetin (syringetin). The chain is Myricetin 3'/5'-O-methyltransferase 1 from Solanum habrochaites (Wild tomato).